We begin with the raw amino-acid sequence, 446 residues long: Chromosomal replication initiator protein DnaA (446 aa).

Positions 1-81 are domain I, interacts with DnaA modulators; sequence MENISDLWNS…AKLAIRFIIP (81 aa). The interval 81–109 is domain II; it reads PQSQAEEDIDLPSVKQKHAHDESNHLPQS. A domain III, AAA+ region region spans residues 110-326; sequence MLNPKYTFDT…GALIRVVAYS (217 aa). The ATP site is built by Gly154, Gly156, Lys157, and Thr158. The domain IV, binds dsDNA stretch occupies residues 327-446; the sequence is SLINKDMNAD…HVEEVKDILK (120 aa).

Belongs to the DnaA family. As to quaternary structure, oligomerizes as a right-handed, spiral filament on DNA at oriC.

The protein resides in the cytoplasm. Its function is as follows. Plays an essential role in the initiation and regulation of chromosomal replication. ATP-DnaA binds to the origin of replication (oriC) to initiate formation of the DNA replication initiation complex once per cell cycle. Binds the DnaA box (a 9 base pair repeat at the origin) and separates the double-stranded (ds)DNA. Forms a right-handed helical filament on oriC DNA; dsDNA binds to the exterior of the filament while single-stranded (ss)DNA is stabiized in the filament's interior. The ATP-DnaA-oriC complex binds and stabilizes one strand of the AT-rich DNA unwinding element (DUE), permitting loading of DNA polymerase. After initiation quickly degrades to an ADP-DnaA complex that is not apt for DNA replication. Binds acidic phospholipids. In Bacillus mycoides (strain KBAB4) (Bacillus weihenstephanensis), this protein is Chromosomal replication initiator protein DnaA.